We begin with the raw amino-acid sequence, 252 residues long: Floral homeotic protein AGAMOUS (252 aa).

Positions 1–20 are disordered; the sequence is MAYQSELGGDSSPLRKSGRG. One can recognise an MADS-box domain in the interval 19–73; sequence RGKIEIKRIENTTNRQVTFCKRRNGLLKKAYELSVLCDAEVALIVFSSRGRLYEY. The stretch at 99 to 166 forms a coiled coil; that stretch reads AEINAQYYQQ…KKNELLFSEI (68 aa). Residues 103–193 enclose the K-box domain; the sequence is AQYYQQESAK…RAKIAENERN (91 aa).

As to quaternary structure, homodimer, capable of binding to CArG-box sequences. Forms a heterodimer via the K-box domain with either SEPALATTA1/AGL2, SEPALATTA2/AGL4, SEPALLATA3/AGL9 or AGL6. Heterodimerization also seen with some other Agamous-like MADS-box proteins. Interacts with AGL15 and AGL16. Component of a complex made of FLOR1, VSP1 and AGAMOUS (AG). Binds directly with FLR1. Detected early in the floral meristem but mostly expressed in stamen and carpel primordia.

The protein resides in the nucleus. In terms of biological role, probable transcription factor involved in the control of organ identity during the early development of flowers. Is required for normal development of stamens and carpels in the wild-type flower. Plays a role in maintaining the determinacy of the floral meristem. Acts as C class cadastral protein by repressing the A class floral homeotic genes like APETALA1. Forms a heterodimer via the K-box domain with either SEPALATTA1/AGL2, SEPALATTA2/AGL4, SEPALLATA3/AGL9 or AGL6 that could be involved in genes regulation during floral meristem development. Controls AHL21/GIK, a multifunctional chromatin modifier in reproductive organ patterning and differentiation. Induces microsporogenesis through the activation of SPL/NZZ. In Arabidopsis thaliana (Mouse-ear cress), this protein is Floral homeotic protein AGAMOUS (AG).